Consider the following 239-residue polypeptide: Probable septum site-determining protein MinC (239 aa).

Belongs to the MinC family. Interacts with MinD and FtsZ.

In terms of biological role, cell division inhibitor that blocks the formation of polar Z ring septums. Rapidly oscillates between the poles of the cell to destabilize FtsZ filaments that have formed before they mature into polar Z rings. Prevents FtsZ polymerization. The sequence is that of Probable septum site-determining protein MinC from Colwellia psychrerythraea (strain 34H / ATCC BAA-681) (Vibrio psychroerythus).